The chain runs to 499 residues: Glycerol kinase (499 aa).

Thr-17 contacts ADP. Thr-17, Thr-18, and Ser-19 together coordinate ATP. Thr-17 contributes to the sn-glycerol 3-phosphate binding site. Arg-21 is an ADP binding site. Positions 87, 88, 139, and 243 each coordinate sn-glycerol 3-phosphate. Positions 87, 88, 139, 243, and 244 each coordinate glycerol. Residues Thr-265 and Gly-308 each coordinate ADP. ATP-binding residues include Thr-265, Gly-308, Gln-312, and Gly-409. Positions 409 and 413 each coordinate ADP.

It belongs to the FGGY kinase family.

It catalyses the reaction glycerol + ATP = sn-glycerol 3-phosphate + ADP + H(+). It functions in the pathway polyol metabolism; glycerol degradation via glycerol kinase pathway; sn-glycerol 3-phosphate from glycerol: step 1/1. Its activity is regulated as follows. Inhibited by fructose 1,6-bisphosphate (FBP). Key enzyme in the regulation of glycerol uptake and metabolism. Catalyzes the phosphorylation of glycerol to yield sn-glycerol 3-phosphate. This is Glycerol kinase from Pseudomonas entomophila (strain L48).